Consider the following 482-residue polypeptide: Ribosomal protein uS12 methylthiotransferase RimO (482 aa).

Residues 2–115 (MKVHIITLGC…IAEVVETFQP (114 aa)) enclose the MTTase N-terminal domain. [4Fe-4S] cluster-binding residues include Cys11, Cys47, Cys79, Cys177, Cys181, and Cys184. One can recognise a Radical SAM core domain in the interval 163-394 (RAVGPSAYLK…MRLQQRISRE (232 aa)). Positions 397-466 (RRWLGRVVRV…DYDLWGDVVG (70 aa)) constitute a TRAM domain.

Belongs to the methylthiotransferase family. RimO subfamily. Requires [4Fe-4S] cluster as cofactor.

It localises to the cytoplasm. The catalysed reaction is L-aspartate(89)-[ribosomal protein uS12]-hydrogen + (sulfur carrier)-SH + AH2 + 2 S-adenosyl-L-methionine = 3-methylsulfanyl-L-aspartate(89)-[ribosomal protein uS12]-hydrogen + (sulfur carrier)-H + 5'-deoxyadenosine + L-methionine + A + S-adenosyl-L-homocysteine + 2 H(+). Functionally, catalyzes the methylthiolation of an aspartic acid residue of ribosomal protein uS12. The chain is Ribosomal protein uS12 methylthiotransferase RimO from Roseiflexus castenholzii (strain DSM 13941 / HLO8).